A 359-amino-acid polypeptide reads, in one-letter code: Aminomethyltransferase (359 aa).

Belongs to the GcvT family. The glycine cleavage system is composed of four proteins: P, T, L and H.

It carries out the reaction N(6)-[(R)-S(8)-aminomethyldihydrolipoyl]-L-lysyl-[protein] + (6S)-5,6,7,8-tetrahydrofolate = N(6)-[(R)-dihydrolipoyl]-L-lysyl-[protein] + (6R)-5,10-methylene-5,6,7,8-tetrahydrofolate + NH4(+). Functionally, the glycine cleavage system catalyzes the degradation of glycine. The chain is Aminomethyltransferase from Synechococcus sp. (strain RCC307).